A 168-amino-acid polypeptide reads, in one-letter code: uncharacterized protein (168 aa).

The N-acetyltransferase domain maps to 14-168; the sequence is IDIPLLDAAS…EYKHWIYVTK (155 aa).

Belongs to the acetyltransferase family.

This is an uncharacterized protein from Bacillus subtilis (strain 168).